We begin with the raw amino-acid sequence, 285 residues long: Dihydropteroate synthase (285 aa).

Residues 25-271 (TLVMGILNVT…DVKQIARMAK (247 aa)) form the Pterin-binding domain. N32 provides a ligand contact to Mg(2+). Residues T72, D106, N125, D189, K225, and 259–261 (RVH) contribute to the (7,8-dihydropterin-6-yl)methyl diphosphate site.

This sequence belongs to the DHPS family. The cofactor is Mg(2+).

The enzyme catalyses (7,8-dihydropterin-6-yl)methyl diphosphate + 4-aminobenzoate = 7,8-dihydropteroate + diphosphate. Its pathway is cofactor biosynthesis; tetrahydrofolate biosynthesis; 7,8-dihydrofolate from 2-amino-4-hydroxy-6-hydroxymethyl-7,8-dihydropteridine diphosphate and 4-aminobenzoate: step 1/2. Its function is as follows. Catalyzes the condensation of para-aminobenzoate (pABA) with 6-hydroxymethyl-7,8-dihydropterin diphosphate (DHPt-PP) to form 7,8-dihydropteroate (H2Pte), the immediate precursor of folate derivatives. In Bacillus subtilis (strain 168), this protein is Dihydropteroate synthase (sul).